A 711-amino-acid chain; its full sequence is Quinolinate synthase, chloroplastic (711 aa).

A chloroplast-targeting transit peptide spans 1–41 (MDVSSLAAAAPSLVAPPLHHKPHLAFPPHHPSPARGSIGVR). The interval 17 to 63 (PLHHKPHLAFPPHHPSPARGSIGVRCAHSPSPHPLRPSAATADEEVS) is disordered. The active-site Cysteine persulfide intermediate is the Cys114. Positions 263 and 289 each coordinate iminosuccinate. Residue Cys343 participates in [4Fe-4S] cluster binding. Residues 372-374 (YIN) and Ser394 contribute to the iminosuccinate site. Cys467 provides a ligand contact to [4Fe-4S] cluster. Iminosuccinate-binding positions include 493–495 (HFE) and Thr518. Cys631 is a [4Fe-4S] cluster binding site.

Belongs to the quinolinate synthase family. Type 1 subfamily. In terms of assembly, homodimer. The cofactor is [4Fe-4S] cluster.

The protein resides in the plastid. It is found in the chloroplast. It catalyses the reaction iminosuccinate + dihydroxyacetone phosphate = quinolinate + phosphate + 2 H2O + H(+). It functions in the pathway cofactor biosynthesis; NAD(+) biosynthesis; quinolinate from iminoaspartate: step 1/1. In terms of biological role, catalyzes the condensation of iminoaspartate with dihydroxyacetone phosphate to form quinolinate. This Oryza sativa subsp. japonica (Rice) protein is Quinolinate synthase, chloroplastic.